We begin with the raw amino-acid sequence, 389 residues long: Cellobiose 2-epimerase (389 aa).

Belongs to the cellobiose 2-epimerase family.

It localises to the cytoplasm. The enzyme catalyses D-cellobiose = beta-D-glucosyl-(1-&gt;4)-D-mannopyranose. Its activity is regulated as follows. Enhanced by Mg(2+) and Ca(2+) ions, ethylenediaminetetraacetic acid, ethylene glycol tetraacetic acid and citrate. Inhibited by Al(3+), Fe(3+), Co(2+), Cu(2+), Zn(2+), Pb(2+) and Ag(+) ions, iodoacetate, 4-chloromercuribenzoate and N-bromosuccinimide. Catalyzes the reversible epimerization of cellobiose to 4-O-beta-D-glucopyranosyl-D-mannose (Glc-Man). Can also epimerize cellotriose to Glc-Glc-Man, cellotetraose to Glc-Glc-Glc-Man, and lactose to epilactose. The protein is Cellobiose 2-epimerase (ce-ne1) of Ruminococcus albus.